The primary structure comprises 334 residues: tRNA dimethylallyltransferase (334 aa).

Residue 23–30 participates in ATP binding; the sequence is GPTGAGKT. 25-30 is a binding site for substrate; that stretch reads TGAGKT. Interaction with substrate tRNA stretches follow at residues 53 to 56 and 177 to 181; these read DSAL and QRVQR.

Belongs to the IPP transferase family. Monomer. The cofactor is Mg(2+).

It catalyses the reaction adenosine(37) in tRNA + dimethylallyl diphosphate = N(6)-dimethylallyladenosine(37) in tRNA + diphosphate. Its function is as follows. Catalyzes the transfer of a dimethylallyl group onto the adenine at position 37 in tRNAs that read codons beginning with uridine, leading to the formation of N6-(dimethylallyl)adenosine (i(6)A). This chain is tRNA dimethylallyltransferase, found in Polynucleobacter necessarius subsp. necessarius (strain STIR1).